A 560-amino-acid polypeptide reads, in one-letter code: (E)-beta-farnesene synthase (560 aa).

Mg(2+) is bound by residues aspartate 312, aspartate 316, aspartate 457, and glutamate 465. The DDXXD motif signature appears at 312-316 (DDTFD).

This sequence belongs to the terpene synthase family. Mg(2+) serves as cofactor. Requires Co(2+) as cofactor. Mn(2+) is required as a cofactor.

The protein resides in the cytoplasm. It carries out the reaction (2E,6E)-farnesyl diphosphate = (E)-beta-farnesene + diphosphate. It participates in secondary metabolite biosynthesis; terpenoid biosynthesis. Sesquiterpene cyclase catalyzing the production of beta-farnesene from farnesyl diphosphate. The protein is (E)-beta-farnesene synthase of Citrus junos (Yuzu).